We begin with the raw amino-acid sequence, 94 residues long: Non-specific lipid-transfer protein C4 (94 aa).

The signal sequence occupies residues 1–26 (MAASKGNAAAAACALVLVLLAVGAEA). Cystine bridges form between C34-C72, C44-C59, C60-C85, and C70-C92. N-linked (GlcNAc...) asparagine glycosylation is present at N91.

This sequence belongs to the plant LTP family.

Functionally, lipid-transfer protein that may be regulated by the transcription factor UDT1 in developing anthers and play a role in tapetum development. In Oryza sativa subsp. japonica (Rice), this protein is Non-specific lipid-transfer protein C4.